The sequence spans 270 residues: MSDQQQLPVYKIALGIEYDGSKYYGWQRQNEVRSVQEKLEKALSQVANEPITVFCAGRTDAGVHGTGQVVHFETTAQRKDAAWTLGVNANLPGDIAVRWVKAVPDDFHARFSATARRYRYIIYNHRLRPAVLSKGVTHFYEPLDAERMHRAAQCLLGENDFTSFRAVQCQSRTPWRNVMHINVTRHGPYVVVDIKANAFVHHMVRNIVGSLMEVGAHNQPESWIAELLAAKDRTLAAATAKAEGLYLVAVDYPDRYDLPKPPMGPLFLAD.

Aspartate 60 serves as the catalytic Nucleophile. Residues 107–111 form an RNA binding region; it reads FHARF. Residue tyrosine 118 participates in substrate binding. The segment at 168-172 is interaction with tRNA; that stretch reads QCQSR.

This sequence belongs to the tRNA pseudouridine synthase TruA family. As to quaternary structure, homodimer.

It catalyses the reaction uridine(38/39/40) in tRNA = pseudouridine(38/39/40) in tRNA. Its function is as follows. Formation of pseudouridine at positions 38, 39 and 40 in the anticodon stem and loop of transfer RNAs. In Shigella boydii serotype 18 (strain CDC 3083-94 / BS512), this protein is tRNA pseudouridine synthase A.